The primary structure comprises 290 residues: Zinc finger AN1 and C2H2 domain-containing stress-associated protein 16 (290 aa).

2 AN1-type zinc fingers span residues 7–55 (PNLG…QKDV) and 95–145 (VTKK…KPES). Zn(2+)-binding residues include Cys-13, Cys-18, Cys-28, Cys-31, Cys-36, His-39, His-45, Cys-47, Cys-101, Cys-106, Cys-118, Cys-121, Cys-126, His-129, His-135, and Cys-137. 2 C2H2-type zinc fingers span residues 224–247 (EQCV…EKSH) and 261–284 (DVCP…ERDH).

Its function is as follows. May be involved in environmental stress response. This chain is Zinc finger AN1 and C2H2 domain-containing stress-associated protein 16 (SAP16), found in Oryza sativa subsp. japonica (Rice).